A 245-amino-acid polypeptide reads, in one-letter code: Probable phosphatase YcdX (245 aa).

The Zn(2+) site is built by His7, His9, His15, His40, Glu73, His101, His131, Asp192, and His194.

This sequence belongs to the PHP family. As to quaternary structure, homotrimer. Zn(2+) serves as cofactor.

The protein is Probable phosphatase YcdX of Escherichia coli O17:K52:H18 (strain UMN026 / ExPEC).